A 310-amino-acid chain; its full sequence is Protoheme IX farnesyltransferase (310 aa).

9 consecutive transmembrane segments (helical) span residues 26-46 (VMSL…ATVH), 47-67 (PMIA…SGAL), 95-115 (GEAL…LGLA), 118-138 (LFAA…YSMW), 147-167 (IVIG…VATG), 174-194 (LFMF…LALF), 220-240 (VLAY…TGIG), 243-263 (LYLV…VRIW), and 281-301 (FFRF…AEAA).

This sequence belongs to the UbiA prenyltransferase family. Protoheme IX farnesyltransferase subfamily. In terms of assembly, interacts with CtaA.

Its subcellular location is the cell inner membrane. It catalyses the reaction heme b + (2E,6E)-farnesyl diphosphate + H2O = Fe(II)-heme o + diphosphate. Its pathway is porphyrin-containing compound metabolism; heme O biosynthesis; heme O from protoheme: step 1/1. Its function is as follows. Converts heme B (protoheme IX) to heme O by substitution of the vinyl group on carbon 2 of heme B porphyrin ring with a hydroxyethyl farnesyl side group. The protein is Protoheme IX farnesyltransferase of Cereibacter sphaeroides (strain ATCC 17025 / ATH 2.4.3) (Rhodobacter sphaeroides).